The sequence spans 336 residues: 4-hydroxy-2-oxovalerate aldolase (336 aa).

The 251-residue stretch at proline 4 to methionine 254 folds into the Pyruvate carboxyltransferase domain. Position 12–13 (arginine 12–aspartate 13) interacts with substrate. Aspartate 13 contributes to the Mn(2+) binding site. Histidine 16 functions as the Proton acceptor in the catalytic mechanism. Substrate contacts are provided by serine 166 and histidine 193. Residues histidine 193 and histidine 195 each coordinate Mn(2+). Residue tyrosine 284 participates in substrate binding.

Belongs to the 4-hydroxy-2-oxovalerate aldolase family.

The catalysed reaction is (S)-4-hydroxy-2-oxopentanoate = acetaldehyde + pyruvate. In Roseiflexus castenholzii (strain DSM 13941 / HLO8), this protein is 4-hydroxy-2-oxovalerate aldolase.